A 387-amino-acid chain; its full sequence is Succinate--CoA ligase [ADP-forming] subunit beta (387 aa).

In terms of domain architecture, ATP-grasp spans 9–236 (KGLFAKHNVP…RAATDPLELK (228 aa)). ATP-binding positions include Lys45, 52 to 54 (GRG), Ser94, and Glu99. 2 residues coordinate Mg(2+): Asn191 and Asp205. Substrate contacts are provided by residues Asn256 and 318 to 320 (GIT).

It belongs to the succinate/malate CoA ligase beta subunit family. Heterotetramer of two alpha and two beta subunits. It depends on Mg(2+) as a cofactor.

It carries out the reaction succinate + ATP + CoA = succinyl-CoA + ADP + phosphate. It catalyses the reaction GTP + succinate + CoA = succinyl-CoA + GDP + phosphate. It functions in the pathway carbohydrate metabolism; tricarboxylic acid cycle; succinate from succinyl-CoA (ligase route): step 1/1. Succinyl-CoA synthetase functions in the citric acid cycle (TCA), coupling the hydrolysis of succinyl-CoA to the synthesis of either ATP or GTP and thus represents the only step of substrate-level phosphorylation in the TCA. The beta subunit provides nucleotide specificity of the enzyme and binds the substrate succinate, while the binding sites for coenzyme A and phosphate are found in the alpha subunit. In Mycobacterium ulcerans (strain Agy99), this protein is Succinate--CoA ligase [ADP-forming] subunit beta.